The chain runs to 420 residues: Probable pectate lyase C (420 aa).

Residues 1-20 form the signal peptide; sequence MKLSAPLLVSLAAFSQAVTA. N-linked (GlcNAc...) asparagine glycans are attached at residues N49, N165, and N202. The active site involves R205. In terms of domain architecture, EF-hand spans 262–297; that stretch reads NANFHGYVDNNYYDPDKDGQLDGSELGVSSSNYGGM. D275, D277, D279, Q281, and E286 together coordinate Ca(2+). The tract at residues 357–395 is disordered; sequence ATMGGPGTLNGGTPAKDTDGDGIPDEAEKQLGTDPNTND. N394 carries N-linked (GlcNAc...) asparagine glycosylation.

It belongs to the polysaccharide lyase 1 family. The cofactor is Ca(2+).

The protein resides in the secreted. The enzyme catalyses Eliminative cleavage of (1-&gt;4)-alpha-D-galacturonan to give oligosaccharides with 4-deoxy-alpha-D-galact-4-enuronosyl groups at their non-reducing ends.. In terms of biological role, pectinolytic enzyme consist of four classes of enzymes: pectin lyase, polygalacturonase, pectin methylesterase and rhamnogalacturonase. Among pectinolytic enzymes, pectin lyase is the most important in depolymerization of pectin, since it cleaves internal glycosidic bonds of highly methylated pectins. Favors pectate, the anion, over pectin, the methyl ester. In Neosartorya fischeri (strain ATCC 1020 / DSM 3700 / CBS 544.65 / FGSC A1164 / JCM 1740 / NRRL 181 / WB 181) (Aspergillus fischerianus), this protein is Probable pectate lyase C (plyC).